A 330-amino-acid chain; its full sequence is PTS system mannose-specific EIIAB component (330 aa).

One can recognise a PTS EIIA type-4 domain in the interval 2–130 (GIGIIIASHG…NIIKESKDGI (129 aa)). The Tele-phosphohistidine intermediate; for EIIA activity role is filled by His-10. Phosphohistidine; by HPr is present on His-10. Positions 143–161 (TAATEKVVNALQGAIPAGT) are hinge. Residues 166-330 (GKLKINLARV…FELIQKANIK (165 aa)) enclose the PTS EIIB type-4 domain. His-181 serves as the catalytic Pros-phosphohistidine intermediate; for EIIB activity. Phosphohistidine; by EIIA is present on His-181.

As to quaternary structure, homodimer.

It is found in the cytoplasm. The protein resides in the cell membrane. It catalyses the reaction D-mannose(out) + N(pros)-phospho-L-histidyl-[protein] = D-mannose 6-phosphate(in) + L-histidyl-[protein]. In terms of biological role, the phosphoenolpyruvate-dependent sugar phosphotransferase system (sugar PTS), a major carbohydrate active transport system, catalyzes the phosphorylation of incoming sugar substrates concomitantly with their translocation across the cell membrane. The enzyme II ManXYZ PTS system is involved in mannose transport. The polypeptide is PTS system mannose-specific EIIAB component (Streptococcus pyogenes serotype M6 (strain ATCC BAA-946 / MGAS10394)).